The sequence spans 286 residues: Bifunctional protein FolD (286 aa).

NADP(+) contacts are provided by residues G168–G170, T195, and V236.

Belongs to the tetrahydrofolate dehydrogenase/cyclohydrolase family. In terms of assembly, homodimer.

It catalyses the reaction (6R)-5,10-methylene-5,6,7,8-tetrahydrofolate + NADP(+) = (6R)-5,10-methenyltetrahydrofolate + NADPH. It carries out the reaction (6R)-5,10-methenyltetrahydrofolate + H2O = (6R)-10-formyltetrahydrofolate + H(+). It functions in the pathway one-carbon metabolism; tetrahydrofolate interconversion. Functionally, catalyzes the oxidation of 5,10-methylenetetrahydrofolate to 5,10-methenyltetrahydrofolate and then the hydrolysis of 5,10-methenyltetrahydrofolate to 10-formyltetrahydrofolate. The protein is Bifunctional protein FolD of Mycolicibacterium fortuitum (Mycobacterium fortuitum).